Reading from the N-terminus, the 105-residue chain is Large ribosomal subunit protein uL24 (105 aa).

Belongs to the universal ribosomal protein uL24 family. Part of the 50S ribosomal subunit.

One of two assembly initiator proteins, it binds directly to the 5'-end of the 23S rRNA, where it nucleates assembly of the 50S subunit. Its function is as follows. One of the proteins that surrounds the polypeptide exit tunnel on the outside of the subunit. This chain is Large ribosomal subunit protein uL24, found in Mycobacterium tuberculosis (strain CDC 1551 / Oshkosh).